The sequence spans 150 residues: 3-dehydroquinate dehydratase (150 aa).

Tyr-26 (proton acceptor) is an active-site residue. The substrate site is built by Asn-77, His-83, and Asp-90. The active-site Proton donor is His-103. Substrate-binding positions include 104–105 and Arg-114; that span reads LS.

The protein belongs to the type-II 3-dehydroquinase family. Homododecamer.

It carries out the reaction 3-dehydroquinate = 3-dehydroshikimate + H2O. The protein operates within metabolic intermediate biosynthesis; chorismate biosynthesis; chorismate from D-erythrose 4-phosphate and phosphoenolpyruvate: step 3/7. Its function is as follows. Catalyzes a trans-dehydration via an enolate intermediate. The chain is 3-dehydroquinate dehydratase from Vibrio cholerae serotype O1 (strain ATCC 39541 / Classical Ogawa 395 / O395).